We begin with the raw amino-acid sequence, 306 residues long: Non-specific ribonucleoside hydrolase RihC (306 aa).

H235 is an active-site residue.

This sequence belongs to the IUNH family. RihC subfamily.

Functionally, hydrolyzes both purine and pyrimidine ribonucleosides with a broad-substrate specificity. The chain is Non-specific ribonucleoside hydrolase RihC from Salmonella schwarzengrund (strain CVM19633).